The primary structure comprises 443 residues: GTPase Der (443 aa).

EngA-type G domains are found at residues 3 to 167 (PVIA…PEEK) and 176 to 349 (IKIA…QSIQ). GTP-binding positions include 9–16 (GRPNVGKS), 56–60 (DTGGL), 119–122 (NKAD), 182–189 (GRPNVGKS), 229–233 (DTAGI), and 294–297 (NKWD). The region spanning 350–434 (QELTTGQLTR…PVHIKLKTDP (85 aa)) is the KH-like domain.

It belongs to the TRAFAC class TrmE-Era-EngA-EngB-Septin-like GTPase superfamily. EngA (Der) GTPase family. As to quaternary structure, associates with the 50S ribosomal subunit.

Its function is as follows. GTPase that plays an essential role in the late steps of ribosome biogenesis. The protein is GTPase Der of Coxiella burnetii (strain CbuK_Q154) (Coxiella burnetii (strain Q154)).